The following is a 171-amino-acid chain: Large ribosomal subunit protein uL10 (171 aa).

This sequence belongs to the universal ribosomal protein uL10 family. In terms of assembly, part of the ribosomal stalk of the 50S ribosomal subunit. The N-terminus interacts with L11 and the large rRNA to form the base of the stalk. The C-terminus forms an elongated spine to which L12 dimers bind in a sequential fashion forming a multimeric L10(L12)X complex.

Forms part of the ribosomal stalk, playing a central role in the interaction of the ribosome with GTP-bound translation factors. The chain is Large ribosomal subunit protein uL10 from Sphingopyxis alaskensis (strain DSM 13593 / LMG 18877 / RB2256) (Sphingomonas alaskensis).